A 708-amino-acid polypeptide reads, in one-letter code: Protein MICRORCHIDIA 5 (708 aa).

Over residues 1–11 (MAESGSTNPKS) the composition is skewed to polar residues. Residues 1–47 (MAESGSTNPKSPSVVPDSTLGGLKRDLRNYHDGDDSNNLSIKKSKTT) form a disordered region. Positions 23–34 (LKRDLRNYHDGD) are enriched in basic and acidic residues. Residues 590 to 665 (SVNLEAELQK…LENRQEGVST (76 aa)) are a coiled coil. The short motif at 672–679 (ARRDVTED) is the Nuclear localization signal element.

It belongs to the MORC ATPase protein family. Homodimer and heterodimer. Component of an RNA-directed DNA methylation (RdDM) complex. It depends on Mg(2+) as a cofactor. The cofactor is Mn(2+).

It localises to the nucleus. Its function is as follows. Exhibits ATPase activity. Binds DNA/RNA in a non-specific manner and exhibits endonuclease activity. Probably involved in DNA repair. Involved in RNA-directed DNA methylation (RdDM) as a component of the RdDM machinery and required for gene silencing. May also be involved in the regulation of chromatin architecture to maintain gene silencing. This Arabidopsis thaliana (Mouse-ear cress) protein is Protein MICRORCHIDIA 5.